A 488-amino-acid polypeptide reads, in one-letter code: Ribulose bisphosphate carboxylase large chain (488 aa).

Residues Asn-127 and Thr-177 each contribute to the substrate site. Lys-179 (proton acceptor) is an active-site residue. Substrate is bound at residue Lys-181. 3 residues coordinate Mg(2+): Lys-205, Asp-207, and Glu-208. Lys-205 bears the N6-carboxylysine mark. Catalysis depends on His-297, which acts as the Proton acceptor. Arg-298, His-330, and Ser-382 together coordinate substrate.

This sequence belongs to the RuBisCO large chain family. Type I subfamily. In terms of assembly, heterohexadecamer of 8 large chains and 8 small chains. Mg(2+) serves as cofactor.

The protein resides in the plastid. Its subcellular location is the chloroplast. It carries out the reaction 2 (2R)-3-phosphoglycerate + 2 H(+) = D-ribulose 1,5-bisphosphate + CO2 + H2O. The catalysed reaction is D-ribulose 1,5-bisphosphate + O2 = 2-phosphoglycolate + (2R)-3-phosphoglycerate + 2 H(+). RuBisCO catalyzes two reactions: the carboxylation of D-ribulose 1,5-bisphosphate, the primary event in carbon dioxide fixation, as well as the oxidative fragmentation of the pentose substrate in the photorespiration process. Both reactions occur simultaneously and in competition at the same active site. The polypeptide is Ribulose bisphosphate carboxylase large chain (Guillardia theta (Cryptophyte)).